We begin with the raw amino-acid sequence, 81 residues long: MKRAAIIFIRFYQKAISPLFPPTCRFYPTCSNYGLEAIQRFGFIKGSYLLIKRLLKCHPLHPGGFDPVPNQTDQKKEGDSD.

The protein belongs to the UPF0161 family.

The protein resides in the cell membrane. Its function is as follows. Could be involved in insertion of integral membrane proteins into the membrane. The sequence is that of Putative membrane protein insertion efficiency factor 1 from Bacillus licheniformis (strain ATCC 14580 / DSM 13 / JCM 2505 / CCUG 7422 / NBRC 12200 / NCIMB 9375 / NCTC 10341 / NRRL NRS-1264 / Gibson 46).